Consider the following 662-residue polypeptide: Protein associated with UVRAG as autophagy enhancer (662 aa).

2 disordered regions span residues 1–34 and 58–131; these read MVSQ…RLLN and DVQQ…SLSS. The segment covering 58–71 has biased composition (low complexity); the sequence is DVQQQPQDLQSQVP. Residues 100-113 are compositionally biased toward polar residues; it reads AETTLSEDTTDSVG. Low complexity predominate over residues 114–131; that stretch reads SASPHGSSEKSSSFSLSS. The residue at position 157 (S157) is a Phosphoserine; by MTOR. The interaction with UVRAG stretch occupies residues 196–235; it reads EVFVLPVDVEKENAHFYVADMIISAMEKMKCNILSQQQTE. N6-acetyllysine occurs at positions 483, 523, 533, 573, and 633.

Interacts with UVRAG; the interaction is direct and promotes association with the PI3K/PI3KC3 and HOPS complexes. Interacts with STX17. In terms of processing, phosphorylated by MTOR at Ser-157 under nutrient-rich conditions. Phosphorylation prevents acetylation by KAT5/TIP60 and impairs RUBCNL/PACER function and autophagosome maturation. Under autophagy induction, Phosphorylation by MTOR is repressed, enabling acetylation by KAT5/TIP60. Post-translationally, acetylated by KAT5/TIP60 under autophagy induction, promoting autophagosome maturation and lipid metabolism. Acetylation is prevented by phosphorylation by MTOR. Lys-483 and Lys-573 constitute the key sites for tuning function in autophagy. In terms of tissue distribution, expressed weakly in cervical carcinoma cell lines.

It localises to the cytoplasmic vesicle. The protein resides in the autophagosome membrane. Its function is as follows. Regulator of autophagy that promotes autophagosome maturation by facilitating the biogenesis of phosphatidylinositol 3-phosphate (PtdIns(3)P) in late steps of autophagy. Acts by antagonizing RUBCN, thereby stimulating phosphatidylinositol 3-kinase activity of the PI3K/PI3KC3 complex. Following anchorage to the autophagosomal SNARE STX17, promotes the recruitment of PI3K/PI3KC3 and HOPS complexes to the autophagosome to regulate the fusion specificity of autophagosomes with late endosomes/lysosomes. Binds phosphoinositides phosphatidylinositol 3-phosphate (PtdIns(3)P), 4-phosphate (PtdIns(4)P) and 5-phosphate (PtdIns(5)P). In addition to its role in autophagy, acts as a regulator of lipid and glycogen homeostasis. May act as a tumor suppressor. In Homo sapiens (Human), this protein is Protein associated with UVRAG as autophagy enhancer.